The chain runs to 540 residues: Protein dml-1 (540 aa).

Residues 517-540 (NELAEMADEYHEGWSSGSDDGDDD) form a disordered region.

It belongs to the misato family.

It localises to the mitochondrion. Its function is as follows. Involved in the partitioning of the mitochondrial organelle and mitochondrial DNA (mtDNA) inheritance. The sequence is that of Protein dml-1 (dml-1) from Neurospora crassa (strain ATCC 24698 / 74-OR23-1A / CBS 708.71 / DSM 1257 / FGSC 987).